The following is a 760-amino-acid chain: uncharacterized protein (760 aa).

An N-terminal signal peptide occupies residues 1-20; sequence MKFKLFLGSSFFGVATLLIA. Cys21 is lipidated: N-palmitoyl cysteine. Cys21 carries the S-diacylglycerol cysteine lipid modification. Disordered regions lie at residues 221–243, 272–315, and 705–741; these read ENAANGTTEKAEKTVSASSLQLK, AKTN…TSDD, and IKATSKEGEQNQGKKGDGAQNQGKKGDGAQNGKNDKA. Positions 272 to 284 are enriched in basic and acidic residues; it reads AKTNGEKGNEKQE. Positions 300-312 are enriched in polar residues; it reads KNTSQDKTQNTQT. Residues 705 to 721 show a composition bias toward basic and acidic residues; the sequence is IKATSKEGEQNQGKKGD.

Belongs to the MG185/MG260 family.

It is found in the cell membrane. This is an uncharacterized protein from Mycoplasma pneumoniae (strain ATCC 29342 / M129 / Subtype 1) (Mycoplasmoides pneumoniae).